Consider the following 161-residue polypeptide: MEAKKDKAQQVADVSHLLSTSAGFVIFDYTSMSAIEATSIRKKLFKNGSKIKVIKNNILRRALKAGKFEGIDETAIKGKLAVAVGVNEIVETLKAVDGVVKAKEAMNFVCGYFDNRAFNSADLEKIAKLPGRNELYGMFLSVLQAPLRKFLYALEAVKAAK.

It belongs to the universal ribosomal protein uL10 family. As to quaternary structure, part of the ribosomal stalk of the 50S ribosomal subunit. The N-terminus interacts with L11 and the large rRNA to form the base of the stalk. The C-terminus forms an elongated spine to which L12 dimers bind in a sequential fashion forming a multimeric L10(L12)X complex.

Its function is as follows. Forms part of the ribosomal stalk, playing a central role in the interaction of the ribosome with GTP-bound translation factors. This is Large ribosomal subunit protein uL10 (rplJ) from Mycoplasma pneumoniae (strain ATCC 29342 / M129 / Subtype 1) (Mycoplasmoides pneumoniae).